Consider the following 1213-residue polypeptide: DNA-directed RNA polymerase subunit beta' (1213 aa).

Residues Cys-60, Cys-62, Cys-75, and Cys-78 each coordinate Zn(2+). Residues Asp-450, Asp-452, and Asp-454 each coordinate Mg(2+). Zn(2+)-binding residues include Cys-819, Cys-893, Cys-900, and Cys-903.

The protein belongs to the RNA polymerase beta' chain family. In terms of assembly, the RNAP catalytic core consists of 2 alpha, 1 beta, 1 beta' and 1 omega subunit. When a sigma factor is associated with the core the holoenzyme is formed, which can initiate transcription. Mg(2+) serves as cofactor. It depends on Zn(2+) as a cofactor.

It carries out the reaction RNA(n) + a ribonucleoside 5'-triphosphate = RNA(n+1) + diphosphate. DNA-dependent RNA polymerase catalyzes the transcription of DNA into RNA using the four ribonucleoside triphosphates as substrates. The protein is DNA-directed RNA polymerase subunit beta' of Streptococcus pyogenes serotype M18 (strain MGAS8232).